The chain runs to 537 residues: CTP synthase (537 aa).

The amidoligase domain stretch occupies residues 1-265; the sequence is MVHFIFVTGG…DNKVLKFFNI (265 aa). S13 contributes to the CTP binding site. Position 13 (S13) interacts with UTP. Residues 14 to 19 and D71 each bind ATP; that span reads SLGKGL. Residues D71 and E139 each coordinate Mg(2+). CTP contacts are provided by residues 146 to 148 and K222; that span reads DIE. Residue K222 participates in UTP binding. In terms of domain architecture, Glutamine amidotransferase type-1 spans 290-536; the sequence is RIAIIAKYHK…IKAAIEYNKC (247 aa). G352 is an L-glutamine binding site. Residue C379 is the Nucleophile; for glutamine hydrolysis of the active site. L-glutamine is bound by residues 380-383, E403, and R464; that span reads FGMQ. Active-site residues include H509 and E511.

Belongs to the CTP synthase family. As to quaternary structure, homotetramer.

It carries out the reaction UTP + L-glutamine + ATP + H2O = CTP + L-glutamate + ADP + phosphate + 2 H(+). The enzyme catalyses L-glutamine + H2O = L-glutamate + NH4(+). It catalyses the reaction UTP + NH4(+) + ATP = CTP + ADP + phosphate + 2 H(+). It participates in pyrimidine metabolism; CTP biosynthesis via de novo pathway; CTP from UDP: step 2/2. With respect to regulation, allosterically activated by GTP, when glutamine is the substrate; GTP has no effect on the reaction when ammonia is the substrate. The allosteric effector GTP functions by stabilizing the protein conformation that binds the tetrahedral intermediate(s) formed during glutamine hydrolysis. Inhibited by the product CTP, via allosteric rather than competitive inhibition. Its function is as follows. Catalyzes the ATP-dependent amination of UTP to CTP with either L-glutamine or ammonia as the source of nitrogen. Regulates intracellular CTP levels through interactions with the four ribonucleotide triphosphates. This chain is CTP synthase, found in Rickettsia conorii (strain ATCC VR-613 / Malish 7).